We begin with the raw amino-acid sequence, 258 residues long: Thrombin-like enzyme saxthrombin (258 aa).

The first 18 residues, 1–18 (MVLIRVLANLLILQLSYA), serve as a signal peptide directing secretion. Residues 19 to 24 (QKSSEL) constitute a propeptide that is removed on maturation. The region spanning 25–249 (VIGGDECNIN…YNHWIQSIIA (225 aa)) is the Peptidase S1 domain. Disulfide bonds link Cys-31–Cys-163, Cys-50–Cys-66, Cys-98–Cys-256, Cys-142–Cys-210, Cys-174–Cys-189, and Cys-200–Cys-225. N-linked (GlcNAc...) asparagine glycosylation is present at Asn-44. Catalysis depends on charge relay system residues His-65 and Asp-110. Residue Ser-204 is the Charge relay system of the active site. Asn-251 carries an N-linked (GlcNAc...) asparagine glycan.

It belongs to the peptidase S1 family. Snake venom subfamily. In terms of assembly, monomer. As to expression, expressed by the venom gland.

Its subcellular location is the secreted. Thrombin-like snake venom serine protease that shows strong blood coagulation activity in vitro. This is Thrombin-like enzyme saxthrombin from Gloydius intermedius (Central Asian pit viper).